A 238-amino-acid chain; its full sequence is Ribonuclease PH (238 aa).

Phosphate contacts are provided by residues arginine 86 and 124 to 126 (GTR).

Belongs to the RNase PH family. Homohexameric ring arranged as a trimer of dimers.

The enzyme catalyses tRNA(n+1) + phosphate = tRNA(n) + a ribonucleoside 5'-diphosphate. Its function is as follows. Phosphorolytic 3'-5' exoribonuclease that plays an important role in tRNA 3'-end maturation. Removes nucleotide residues following the 3'-CCA terminus of tRNAs; can also add nucleotides to the ends of RNA molecules by using nucleoside diphosphates as substrates, but this may not be physiologically important. Probably plays a role in initiation of 16S rRNA degradation (leading to ribosome degradation) during starvation. This is Ribonuclease PH from Halorhodospira halophila (strain DSM 244 / SL1) (Ectothiorhodospira halophila (strain DSM 244 / SL1)).